A 99-amino-acid polypeptide reads, in one-letter code: Malonate decarboxylase acyl carrier protein (99 aa).

At Ser-25 the chain carries O-(phosphoribosyl dephospho-coenzyme A)serine.

Belongs to the MdcC family. In terms of processing, covalently binds the prosthetic group of malonate decarboxylase.

The protein resides in the cytoplasm. Subunit of malonate decarboxylase, it is an acyl carrier protein to which acetyl and malonyl thioester residues are bound via a 2'-(5''-phosphoribosyl)-3'-dephospho-CoA prosthetic group and turn over during the catalytic mechanism. The protein is Malonate decarboxylase acyl carrier protein of Pseudomonas fluorescens (strain ATCC BAA-477 / NRRL B-23932 / Pf-5).